A 113-amino-acid polypeptide reads, in one-letter code: Transcriptional regulator RamA (113 aa).

Residues 9–107 (DTIVEWIDDN…NLPPGAYRKE (99 aa)) enclose the HTH araC/xylS-type domain. 2 consecutive DNA-binding regions (H-T-H motif) follow at residues 26–47 (DDIA…MQYK) and 74–97 (VYDI…TRTF).

Functionally, transcriptional regulator. Binds to regulatory regions of target genes, including efflux pump operon acrAB and outer membrane protein gene tolC. Represses transcription of genes belonging to the flagellar regulon, including flhD, flhB and fliC; probably thereby leading to repression of motility. Represses expression of the flhDC operon in a post-transcriptional manner. Activates expression of acrAB, perhaps thereby conferring multidrug resistance. Involved in indole- and bile-mediated regulation of acrAB; binding of bile to RamA may contribute to activation of expression of acrAB. Plays a role in regulating virulence in mice. This is Transcriptional regulator RamA from Salmonella typhimurium (strain LT2 / SGSC1412 / ATCC 700720).